The primary structure comprises 178 residues: Large ribosomal subunit protein uL6 (178 aa).

The protein belongs to the universal ribosomal protein uL6 family. In terms of assembly, part of the 50S ribosomal subunit.

In terms of biological role, this protein binds to the 23S rRNA, and is important in its secondary structure. It is located near the subunit interface in the base of the L7/L12 stalk, and near the tRNA binding site of the peptidyltransferase center. This chain is Large ribosomal subunit protein uL6, found in Lactococcus lactis subsp. cremoris (strain SK11).